The following is a 621-amino-acid chain: Nuclear distribution protein nudE homolog 1 (621 aa).

2 stretches are compositionally biased toward polar residues: residues 1–20 and 231–263; these read MPSADGSSSARPNGTSSRSD and RSPSTPQTPDLFNRSPASSIVSSPLFSTPTLKT. 4 disordered regions span residues 1-21, 218-372, 389-537, and 569-621; these read MPSADGSSSARPNGTSSRSDQ, ELQN…PKSG, ERVQ…GVVN, and ISTP…GETY. A coiled-coil region spans residues 18-219; the sequence is RSDQLAWYKS…IHEKLRNAEL (202 aa). Low complexity-rich tracts occupy residues 264–288 and 300–310; these read SLMSATATPPSPPISESSSSLRKSM and SASDSSFGSRS. The span at 323–341 shows a compositional bias: polar residues; it reads SRATSYAFTSNRPTPSVTN. 3 stretches are compositionally biased toward low complexity: residues 353–362, 404–414, and 469–496; these read NENTNKHNNN, SPSRTSSRSGS, and SRPSSRTSYSSHSSVSHSTHPSVTPSTR. Basic and acidic residues predominate over residues 599–613; the sequence is DRLEGDMGPPERKSN.

The protein belongs to the nudE family. Self-associates. Interacts with nudF.

The protein resides in the cytoplasm. It is found in the cytoskeleton. Required for nuclear migration within hyphae during vegetative growth. This chain is Nuclear distribution protein nudE homolog 1 (nde1), found in Aspergillus fumigatus (strain ATCC MYA-4609 / CBS 101355 / FGSC A1100 / Af293) (Neosartorya fumigata).